We begin with the raw amino-acid sequence, 277 residues long: Shikimate dehydrogenase (NADP(+)) (277 aa).

Shikimate contacts are provided by residues 15–17 (SLS) and T62. The active-site Proton acceptor is K66. Residues N87 and D102 each contribute to the shikimate site. Residues 127 to 131 (GAGGA), 151 to 156 (NRTVDK), and I219 each bind NADP(+). Y221 is a binding site for shikimate. NADP(+) is bound at residue G242.

It belongs to the shikimate dehydrogenase family. Homodimer.

It carries out the reaction shikimate + NADP(+) = 3-dehydroshikimate + NADPH + H(+). Its pathway is metabolic intermediate biosynthesis; chorismate biosynthesis; chorismate from D-erythrose 4-phosphate and phosphoenolpyruvate: step 4/7. Functionally, involved in the biosynthesis of the chorismate, which leads to the biosynthesis of aromatic amino acids. Catalyzes the reversible NADPH linked reduction of 3-dehydroshikimate (DHSA) to yield shikimate (SA). The polypeptide is Shikimate dehydrogenase (NADP(+)) (Bacillus cereus (strain 03BB102)).